Reading from the N-terminus, the 398-residue chain is Glycerol-3-phosphate dehydrogenase [NAD(+)] 1 (398 aa).

NAD(+) is bound by residues 50–55 (GSGNWG), F138, K161, and A194. Substrate is bound at residue K161. Residue K253 is the Proton acceptor of the active site. NAD(+)-binding residues include R318 and Q350. Position 318–319 (318–319 (RN)) interacts with substrate.

The protein belongs to the NAD-dependent glycerol-3-phosphate dehydrogenase family.

The protein localises to the cytoplasm. The enzyme catalyses sn-glycerol 3-phosphate + NAD(+) = dihydroxyacetone phosphate + NADH + H(+). In Yarrowia lipolytica (strain CLIB 122 / E 150) (Yeast), this protein is Glycerol-3-phosphate dehydrogenase [NAD(+)] 1 (GPD1).